The sequence spans 1953 residues: Putative surface-exposed virulence protein BigA (1953 aa).

The first 27 residues, 1–27 (MNPMQKKKLISIAIALTLQSYYIPAIA), serve as a signal peptide directing secretion. Disordered stretches follow at residues 31–50 (NDDEKECPSNISSLPKEKRA), 88–258 (GGGD…TFSN), and 1496–1517 (TTAPTEGSIPTPPADPNAPQQL). Residues 101 to 103 (PDN) form a 1; truncated repeat. A 15 X 11 AA tandem repeats region spans residues 101–252 (PDNGGDVTPP…DDDDTPPDDS (152 aa)). The stretch at 104 to 113 (GGDVTPPDDG) is one 2; truncated repeat. A 3; truncated repeat occupies 114-122 (GNVTPPDDG). Repeat copies occupy residues 123–133 (GNVTPPDDGGD), 134–144 (DNVTPPDDSGD), 145–155 (DDVAPPDDSGD), 156–166 (DDVTPPDDSGD), 167–177 (DDVTPPDDSGD), 178–188 (GDVTPPDDSGD), 189–199 (DDVTPPDDSGD), 200–210 (DDVTPPDDSGD), 211–221 (DDVTPPDDSGD), 222–232 (DDVTPPDDSGD), and 233–243 (DDVTPPDDSGD). 2 stretches are compositionally biased toward acidic residues: residues 141–177 (DSGDDDVAPPDDSGDDDVTPPDDSGDDDVTPPDDSGD) and 185–249 (DSGD…DTPP). The 15; truncated repeat unit spans residues 244–252 (DDDTPPDDS). The region spanning 1649 to 1952 (SGAQATTVFR…GFMLNVKKTF (304 aa)) is the Autotransporter domain.

The polypeptide is Putative surface-exposed virulence protein BigA (bigA) (Salmonella typhimurium (strain LT2 / SGSC1412 / ATCC 700720)).